Reading from the N-terminus, the 735-residue chain is Photosystem I P700 chlorophyll a apoprotein A2 (735 aa).

8 helical membrane-spanning segments follow: residues 47–70 (IFASHFGQLAIIFLWTSGNLFHVA), 136–159 (LFTGSVFLALVSAVFLFAGWLHLQ), 176–200 (LNHHLSGLFGVSSLAWTGHLVHVAI), 274–292 (MAHHHLAIAVIFIVAGHMY), 331–354 (LHFQLGLALASVGTITSMIAQHIY), 370–396 (AALYTHHQYIAGFIMCGAFAHGAIFFI), 418–440 (AIISHLSWVTLFLGFHTLGLYVH), and 518–536 (FLVHHAIALGLHTTTLILV). 2 residues coordinate [4Fe-4S] cluster: cysteine 560 and cysteine 569. A run of 2 helical transmembrane segments spans residues 576–597 (AFYLAVFWMLNTIGWVTFYFHW) and 644–666 (LSVWAFCFLFGHLIYATGFMFLI). Residues histidine 655, methionine 663, and tyrosine 671 each coordinate chlorophyll a. Tryptophan 672 provides a ligand contact to phylloquinone. The chain crosses the membrane as a helical span at residues 708–728 (LVGLVHFSVGYIFTYAAFLIA).

This sequence belongs to the PsaA/PsaB family. In terms of assembly, the PsaA/B heterodimer binds the P700 chlorophyll special pair and subsequent electron acceptors. PSI consists of a core antenna complex that captures photons, and an electron transfer chain that converts photonic excitation into a charge separation. The eukaryotic PSI reaction center is composed of at least 11 subunits. Requires P700 is a chlorophyll a/chlorophyll a' dimer, A0 is one or more chlorophyll a, A1 is one or both phylloquinones and FX is a shared 4Fe-4S iron-sulfur center. as cofactor.

Its subcellular location is the plastid. The protein resides in the chloroplast thylakoid membrane. It catalyses the reaction reduced [plastocyanin] + hnu + oxidized [2Fe-2S]-[ferredoxin] = oxidized [plastocyanin] + reduced [2Fe-2S]-[ferredoxin]. In terms of biological role, psaA and PsaB bind P700, the primary electron donor of photosystem I (PSI), as well as the electron acceptors A0, A1 and FX. PSI is a plastocyanin/cytochrome c6-ferredoxin oxidoreductase, converting photonic excitation into a charge separation, which transfers an electron from the donor P700 chlorophyll pair to the spectroscopically characterized acceptors A0, A1, FX, FA and FB in turn. Oxidized P700 is reduced on the lumenal side of the thylakoid membrane by plastocyanin or cytochrome c6. The protein is Photosystem I P700 chlorophyll a apoprotein A2 of Chlamydomonas moewusii (Chlamydomonas eugametos).